Here is a 125-residue protein sequence, read N- to C-terminus: MVELDFNKTGGLIPAIAQDHETGEVLMLAYMNEAAWNKTLESGMATYFSRSRQSLWKKGETSGHVQVVKEIRIDCDNDTVLLKVEQKGGAACHLGYKSCFFRRVVKGDDPVIMEQQIFDPKKVYK.

D74 provides a ligand contact to Mg(2+). C75 lines the Zn(2+) pocket. Mg(2+)-binding residues include D76 and D78. Positions 92 and 99 each coordinate Zn(2+).

Belongs to the PRA-CH family. In terms of assembly, homodimer. Mg(2+) serves as cofactor. Zn(2+) is required as a cofactor.

The protein localises to the cytoplasm. The enzyme catalyses 1-(5-phospho-beta-D-ribosyl)-5'-AMP + H2O = 1-(5-phospho-beta-D-ribosyl)-5-[(5-phospho-beta-D-ribosylamino)methylideneamino]imidazole-4-carboxamide. It functions in the pathway amino-acid biosynthesis; L-histidine biosynthesis; L-histidine from 5-phospho-alpha-D-ribose 1-diphosphate: step 3/9. Functionally, catalyzes the hydrolysis of the adenine ring of phosphoribosyl-AMP. The chain is Phosphoribosyl-AMP cyclohydrolase from Desulforapulum autotrophicum (strain ATCC 43914 / DSM 3382 / VKM B-1955 / HRM2) (Desulfobacterium autotrophicum).